A 428-amino-acid chain; its full sequence is MIKIPRGTQDILPDQSRKWRYIEAKLDELMELYNYKEIRTPIFESTDLFARGVGDSTDVVQKEMYTFKDKGDRSITLRPEGTAAVVRSYIENKMQGDPNQPIKLYYNGPMFRYERKQKGRYRQFNQFGVEAIGAQDPSIDAEILAMVMHIYQSFGLKHLKLVINSVGDFDSRKEYNKALIEHFEPVIDTFCNDCQARLYTNPMRILDCKVDRDKEAVKTAPRITDYLNEESKEYFNQVKQYLDDLNIPYVEDPNLVRGLDYYTHTAFELMIDSPDYDGAITTLCGGGRYNGLLELLDGPKQTGIGFALSIERLLLALEEEGIEIEEDEHLDLFIVTMGEKADRYAVNLLNDLRHHGIKADKDYLKRKIKGQMKQANRVGAEYTIVIGEQELEDGNIDIKHMDSGETDSIHLADLVSYFENKKEKQGEK.

The protein belongs to the class-II aminoacyl-tRNA synthetase family. In terms of assembly, homodimer.

It is found in the cytoplasm. The catalysed reaction is tRNA(His) + L-histidine + ATP = L-histidyl-tRNA(His) + AMP + diphosphate + H(+). This chain is Histidine--tRNA ligase, found in Staphylococcus carnosus (strain TM300).